We begin with the raw amino-acid sequence, 318 residues long: Thymidylate synthase (318 aa).

Residues R26 and 181–182 (RR) contribute to the dUMP site. The active-site Nucleophile is C201. DUMP-binding positions include 221-224 (RSAD), N232, and 262-264 (HIY). D224 provides a ligand contact to (6R)-5,10-methylene-5,6,7,8-tetrahydrofolate. A317 serves as a coordination point for (6R)-5,10-methylene-5,6,7,8-tetrahydrofolate.

The protein belongs to the thymidylate synthase family. Bacterial-type ThyA subfamily. As to quaternary structure, homodimer.

The protein resides in the cytoplasm. It carries out the reaction dUMP + (6R)-5,10-methylene-5,6,7,8-tetrahydrofolate = 7,8-dihydrofolate + dTMP. Its pathway is pyrimidine metabolism; dTTP biosynthesis. Functionally, catalyzes the reductive methylation of 2'-deoxyuridine-5'-monophosphate (dUMP) to 2'-deoxythymidine-5'-monophosphate (dTMP) while utilizing 5,10-methylenetetrahydrofolate (mTHF) as the methyl donor and reductant in the reaction, yielding dihydrofolate (DHF) as a by-product. This enzymatic reaction provides an intracellular de novo source of dTMP, an essential precursor for DNA biosynthesis. The chain is Thymidylate synthase from Staphylococcus haemolyticus (strain JCSC1435).